Consider the following 298-residue polypeptide: Proline iminopeptidase (298 aa).

One can recognise an AB hydrolase-1 domain in the interval 26–277 (VLLLHGGPAM…NGSHLAMWDD (252 aa)). The active-site Nucleophile is Ser-103. Asp-244 is an active-site residue. His-271 acts as the Proton donor in catalysis.

This sequence belongs to the peptidase S33 family. Monomer.

The enzyme catalyses Release of N-terminal proline from a peptide.. Functionally, releases the N-terminal proline from various substrates. Cleaves specifically Pro-betaNA and small peptides containing proline at the amino terminal. No activity against hydroxyproline-betaNA. This chain is Proline iminopeptidase (fpaP), found in Elizabethkingia meningoseptica (Chryseobacterium meningosepticum).